We begin with the raw amino-acid sequence, 697 residues long: Elongation factor G (697 aa).

Residues 10–285 (AKTRNIGIMA…GVIDYLPSPL (276 aa)) enclose the tr-type G domain. Residues 19-26 (AHIDAGKT), 83-87 (DTPGH), and 137-140 (NKMD) each bind GTP.

This sequence belongs to the TRAFAC class translation factor GTPase superfamily. Classic translation factor GTPase family. EF-G/EF-2 subfamily.

The protein localises to the cytoplasm. Its function is as follows. Catalyzes the GTP-dependent ribosomal translocation step during translation elongation. During this step, the ribosome changes from the pre-translocational (PRE) to the post-translocational (POST) state as the newly formed A-site-bound peptidyl-tRNA and P-site-bound deacylated tRNA move to the P and E sites, respectively. Catalyzes the coordinated movement of the two tRNA molecules, the mRNA and conformational changes in the ribosome. This is Elongation factor G from Lactobacillus acidophilus (strain ATCC 700396 / NCK56 / N2 / NCFM).